The sequence spans 2645 residues: Non-reducing polyketide synthase AC (2645 aa).

Residues 73–2366 (ALQNLNEWLK…TDIVHNAWPM (2294 aa)) form an N-terminal acylcarrier protein transacylase domain (SAT) region. H260 serves as the catalytic Proton donor/acceptor; for transacylase activity. Residues 416-834 (DDKIAVIGMA…GSNSSLVVTE (419 aa)) enclose the Ketosynthase family 3 (KS3) domain. Residues C583, H718, and H757 each act as for beta-ketoacyl synthase activity in the active site. The segment at 943 to 1252 (CFGGQISTYI…HAVSITTDKS (310 aa)) is malonyl-CoA:ACP transacylase (MAT) domain. The tract at residues 1324–1457 (SKGFTSFAGY…GVCSFCSATD (134 aa)) is N-terminal hotdog fold. Residues 1324–1637 (SKGFTSFAGY…YNKVPLPVMR (314 aa)) form the PKS/mFAS DH domain. The tract at residues 1330–1641 (FAGYIDGNQR…PLPVMRGILG (312 aa)) is product template (PT) domain. H1359 (proton acceptor; for dehydratase activity) is an active-site residue. Residues 1487 to 1637 (NIMQGTANIY…YNKVPLPVMR (151 aa)) are C-terminal hotdog fold. Residue D1542 is the Proton donor; for dehydratase activity of the active site. Positions 1684–1696 (NGTTGTENPQIKS) are enriched in polar residues. The interval 1684-1716 (NGTTGTENPQIKSKTNKVKKVPTRKSGGSDLET) is disordered. Basic residues predominate over residues 1697 to 1706 (KTNKVKKVPT). Positions 1711 to 1788 (GSDLETPAKT…SLVKYIREIR (78 aa)) constitute a Carrier domain. S1748 carries the O-(pantetheine 4'-phosphoryl)serine modification. Residues 1794–1805 (QNVDDSESESEE) are compositionally biased toward acidic residues. The disordered stretch occupies residues 1794–1816 (QNVDDSESESEELQQQATPIDSA). The active-site For methyltransferase activity is the Y2009. Residues 2023-2197 (EVFVEKIGSS…SVGYGHVDWT (175 aa)) are methyltransferase (CMeT) domain. An NADPH-binding (R) domain region spans residues 2269–2573 (CVLITGATGS…NIIPFYDWVQ (305 aa)).

The protein operates within mycotoxin biosynthesis. Its function is as follows. Non-reducing polyketide synthase; part of the gene cluster that mediates the biosynthesis of the selective antifungal agent ascochitine, an o-quinone methide that plays a possible protective role against other microbial competitors in nature and is considered to be important for pathogenicity of legume-associated Didymella species. The pathway probably begins with the synthesis of a keto-aldehyde intermediate by the ascochitine non-reducing polyketide synthase pksAC from successive condensations of 4 malonyl-CoA units, presumably with a simple acetyl-CoA starter unit. Release of the keto-aldehyde intermediate is consistent with the presence of the C-terminal reductive release domain. The HR-PKS (orf7) probably makes a diketide starter unit which is passed to the non-reducing polyketide synthase pksAC for further extension, producing ascochital and ascochitine. The aldehyde dehydrogenase (orf1), the 2-oxoglutarate-dependent dioxygenase (orf3) and the dehydrogenase (orf9) are probably involved in subsequent oxidations of methyl groups to the carboxylic acid of the heterocyclic ring. The ascochitine gene cluster also includes a gene encoding a short peptide (orf2) that is often found in secondary metabolite gene clusters and which function has still to be determined. The sequence is that of Non-reducing polyketide synthase AC from Didymella fabae (Leaf and pod spot disease fungus).